The sequence spans 360 residues: Phenylalanine--tRNA ligase alpha subunit (360 aa).

Glu-264 lines the Mg(2+) pocket.

This sequence belongs to the class-II aminoacyl-tRNA synthetase family. Phe-tRNA synthetase alpha subunit type 1 subfamily. In terms of assembly, tetramer of two alpha and two beta subunits. Requires Mg(2+) as cofactor.

It is found in the cytoplasm. It catalyses the reaction tRNA(Phe) + L-phenylalanine + ATP = L-phenylalanyl-tRNA(Phe) + AMP + diphosphate + H(+). The sequence is that of Phenylalanine--tRNA ligase alpha subunit from Streptomyces avermitilis (strain ATCC 31267 / DSM 46492 / JCM 5070 / NBRC 14893 / NCIMB 12804 / NRRL 8165 / MA-4680).